Here is a 258-residue protein sequence, read N- to C-terminus: Global transcriptional regulator CodY (258 aa).

The segment at 1–156 (MSTLLDKTRK…SATIVGLEIL (156 aa)) is GAF domain. A DNA-binding region (H-T-H motif) is located at residues 204-223 (ASKIADKVGITRSVIVNALR).

Belongs to the CodY family.

It localises to the cytoplasm. Its function is as follows. DNA-binding global transcriptional regulator which is involved in the adaptive response to starvation and acts by directly or indirectly controlling the expression of numerous genes in response to nutrient availability. During rapid exponential growth, CodY is highly active and represses genes whose products allow adaptation to nutrient depletion. The polypeptide is Global transcriptional regulator CodY (Clostridium kluyveri (strain NBRC 12016)).